The sequence spans 372 residues: Queuine tRNA-ribosyltransferase (372 aa).

Asp-92 serves as the catalytic Proton acceptor. Substrate is bound by residues 92–96 (DSGGF), Asp-146, Gln-188, and Gly-215. An RNA binding region spans residues 246 to 252 (GIGTLRE). Asp-265 acts as the Nucleophile in catalysis. The RNA binding; important for wobble base 34 recognition stretch occupies residues 270–274 (TRLGR). Zn(2+) is bound by residues Cys-303, Cys-305, Cys-308, and His-334.

The protein belongs to the queuine tRNA-ribosyltransferase family. Homodimer. Within each dimer, one monomer is responsible for RNA recognition and catalysis, while the other monomer binds to the replacement base PreQ1. The cofactor is Zn(2+).

It catalyses the reaction 7-aminomethyl-7-carbaguanine + guanosine(34) in tRNA = 7-aminomethyl-7-carbaguanosine(34) in tRNA + guanine. It participates in tRNA modification; tRNA-queuosine biosynthesis. Functionally, catalyzes the base-exchange of a guanine (G) residue with the queuine precursor 7-aminomethyl-7-deazaguanine (PreQ1) at position 34 (anticodon wobble position) in tRNAs with GU(N) anticodons (tRNA-Asp, -Asn, -His and -Tyr). Catalysis occurs through a double-displacement mechanism. The nucleophile active site attacks the C1' of nucleotide 34 to detach the guanine base from the RNA, forming a covalent enzyme-RNA intermediate. The proton acceptor active site deprotonates the incoming PreQ1, allowing a nucleophilic attack on the C1' of the ribose to form the product. After dissociation, two additional enzymatic reactions on the tRNA convert PreQ1 to queuine (Q), resulting in the hypermodified nucleoside queuosine (7-(((4,5-cis-dihydroxy-2-cyclopenten-1-yl)amino)methyl)-7-deazaguanosine). This is Queuine tRNA-ribosyltransferase from Synechococcus sp. (strain CC9902).